Here is a 152-residue protein sequence, read N- to C-terminus: Large ribosomal subunit protein uL22 (152 aa).

Belongs to the universal ribosomal protein uL22 family. In terms of assembly, part of the 50S ribosomal subunit.

This protein binds specifically to 23S rRNA. It makes multiple contacts with different domains of the 23S rRNA in the assembled 50S subunit and ribosome. In terms of biological role, the globular domain of the protein is located near the polypeptide exit tunnel on the outside of the subunit, while an extended beta-hairpin is found that lines the wall of the exit tunnel in the center of the 70S ribosome. The sequence is that of Large ribosomal subunit protein uL22 from Methanothrix thermoacetophila (strain DSM 6194 / JCM 14653 / NBRC 101360 / PT) (Methanosaeta thermophila).